A 2144-amino-acid polypeptide reads, in one-letter code: Cadherin EGF LAG seven-pass G-type receptor 2 (2144 aa).

Cadherin domains follow at residues 1 to 40 (EDQV…APQF), 41 to 146 (LRDS…PPVF), 147 to 248 (EQDE…PPVL), and 253 to 371 (ILFN…SPLL). Over 1-1605 (EDQVSYTLAI…GEILPLKTLT (1605 aa)) the chain is Extracellular. Residues asparagine 261, asparagine 301, asparagine 407, and asparagine 437 are each glycosylated (N-linked (GlcNAc...) asparagine). The EGF-like 1; calcium-binding domain maps to 453–511 (DDNICLREPCENYMRCVSVLRFDSSAPFIASSSVLFRPIHPVGGLRCRCPPGFTGDYCE). 9 cysteine pairs are disulfide-bonded: cysteine 457–cysteine 468, cysteine 462–cysteine 499, cysteine 501–cysteine 510, cysteine 517–cysteine 528, cysteine 522–cysteine 537, cysteine 539–cysteine 548, cysteine 557–cysteine 568, cysteine 562–cysteine 578, and cysteine 580–cysteine 590. An EGF-like 2; calcium-binding domain is found at 513–549 (EVDLCYSRPCGPHGHCRSREGGYTCLCRDGYTGEHCE). One can recognise an EGF-like 3; calcium-binding domain in the interval 553–591 (RSGRCTPGVCKNGGTCVNLLVGGFKCDCPSGDFEKPFCQ). Positions 592-796 (VTTRSFPARS…IANNGTVPGC (205 aa)) constitute a Laminin G-like 1 domain. Residues asparagine 726 and asparagine 790 are each glycosylated (N-linked (GlcNAc...) asparagine). 4 disulfide bridges follow: cysteine 770–cysteine 796, cysteine 803–cysteine 814, cysteine 808–cysteine 823, and cysteine 825–cysteine 834. Residues 799 to 835 (KKNVCDSNTCHNGGTCVNQWDAFSCECPLGFGGKSCA) enclose the EGF-like 4; calcium-binding domain. Asparagine 816 is subject to (3R)-3-hydroxyasparagine. The Laminin G-like 2 domain occupies 839–1016 (ANPQRFLGSS…GESINVEPGC (178 aa)). The N-linked (GlcNAc...) asparagine glycan is linked to asparagine 966. 14 cysteine pairs are disulfide-bonded: cysteine 986/cysteine 1016, cysteine 1022/cysteine 1033, cysteine 1027/cysteine 1042, cysteine 1044/cysteine 1053, cysteine 1057/cysteine 1068, cysteine 1062/cysteine 1080, cysteine 1082/cysteine 1091, cysteine 1112/cysteine 1124, cysteine 1114/cysteine 1131, cysteine 1133/cysteine 1146, cysteine 1149/cysteine 1161, cysteine 1151/cysteine 1168, cysteine 1170/cysteine 1179, and cysteine 1182/cysteine 1194. Residues 1018–1053 (WPDPCDSNPCPTNSYCSNDWDSYSCSCDPGYYGDNC) form the EGF-like 5; calcium-binding domain. Asparagine 1035 is subject to (3R)-3-hydroxyasparagine. Asparagine 1052 carries an N-linked (GlcNAc...) asparagine glycan. Positions 1054 to 1092 (TNVCDLNPCEHQSACTRKPSAPHGYICECLPNYLGPYCE) constitute an EGF-like 6; calcium-binding domain. The region spanning 1108–1147 (TCGPCNCDVSKGFDPDCNKTSGECHCKENHYRPPSSPTCL) is the EGF-like 7; calcium-binding domain. Asparagine 1125 is a glycosylation site (N-linked (GlcNAc...) asparagine). The Laminin EGF-like domain occupies 1149–1196 (CDCYPTGSLSRVCDPEDGQCPCKPGVIGRQCDRCDNPFAEVTTNGCEV). N-linked (GlcNAc...) asparagine glycosylation is found at asparagine 1249, asparagine 1268, and asparagine 1286. The GAIN-B domain maps to 1424–1594 (ETTVILPESV…AVLMDVSRRE (171 aa)). A disordered region spans residues 1439 to 1466 (PMVRSAGPGEAQETEELARRQRRHPELS). Intrachain disulfides connect cysteine 1544-cysteine 1576 and cysteine 1564-cysteine 1578. Positions 1544-1594 (CVFWNHSILVSGTGGWSARGCEVVFRNESHVSCQCNHMTSFAVLMDVSRRE) are GPS. Asparagine 1548 and asparagine 1570 each carry an N-linked (GlcNAc...) asparagine glycan. The chain crosses the membrane as a helical span at residues 1606–1626 (YVALGVTLAALMITFLFLTLL). Topologically, residues 1627–1641 (RALRSNQHGIRRNLT) are cytoplasmic. The helical transmembrane segment at 1642–1662 (AALGLAQLVFLLGINQADLPF) threads the bilayer. Position 1663 (alanine 1663) is a topological domain, extracellular. Residues 1664–1684 (CTVIAILLHFLYLCTFSWALL) traverse the membrane as a helical segment. At 1685–1705 (EALHLYRALTEVRDVNASPMR) the chain is on the cytoplasmic side. Residues 1706–1726 (FYYMLGWGVPAFITGLAVGLD) form a helical membrane-spanning segment. Topologically, residues 1727-1744 (PEGYGNPDFCWLSIYDTL) are extracellular. The chain crosses the membrane as a helical span at residues 1745 to 1765 (IWSFAGPVAFAVSMSVFLYIL). Topologically, residues 1766-1789 (SARASCAAQRQGFEKKGPVSGLRS) are cytoplasmic. The helical transmembrane segment at 1790–1810 (SFTVLLLLSATWLLALLSVNS) threads the bilayer. Over 1811–1816 (DTLLFH) the chain is Extracellular. Residues 1817–1837 (YLFAACNCVQGPFIFLSYVVL) traverse the membrane as a helical segment. Topologically, residues 1838–2144 (SKEVRKALKF…SEFLFFNFLH (307 aa)) are cytoplasmic. The interval 1914–2109 (TLNPGQVPPG…PPRPPPRQSL (196 aa)) is disordered. A compositionally biased stretch (acidic residues) spans 1943–1955 (TDSDSDLSLEDDQ). The segment covering 2016–2025 (GTTTKENSGS) has biased composition (polar residues). The span at 2028-2040 (LEERPRENGDALT) shows a compositional bias: basic and acidic residues. Residues 2082-2095 (GTGSSRGSTASEGS) are compositionally biased toward polar residues.

This sequence belongs to the G-protein coupled receptor 2 family. LN-TM7 subfamily. Heterodimer of 2 chains generated by proteolytic processing; the large extracellular N-terminal fragment and the membrane-bound C-terminal fragment predominantly remain associated and non-covalently linked. Post-translationally, the iron and 2-oxoglutarate dependent 3-hydroxylation of aspartate and asparagine is (R) stereospecific within EGF domains. In terms of processing, autoproteolytically processed at the GPS region of the GAIN-B domain; this cleavage modulates receptor activity. As to expression, expressed in the brain. High expression in cerebellum and olfactory bulb. Weaker expression in cerebral cortex, hippocampus and brain stem.

The protein localises to the cell membrane. Its function is as follows. Receptor that may have an important role in cell/cell signaling during nervous system formation. The polypeptide is Cadherin EGF LAG seven-pass G-type receptor 2 (Rattus norvegicus (Rat)).